Consider the following 207-residue polypeptide: Large ribosomal subunit protein bL25 (207 aa).

Belongs to the bacterial ribosomal protein bL25 family. CTC subfamily. In terms of assembly, part of the 50S ribosomal subunit; part of the 5S rRNA/L5/L18/L25 subcomplex. Contacts the 5S rRNA. Binds to the 5S rRNA independently of L5 and L18.

In terms of biological role, this is one of the proteins that binds to the 5S RNA in the ribosome where it forms part of the central protuberance. The sequence is that of Large ribosomal subunit protein bL25 from Azorhizobium caulinodans (strain ATCC 43989 / DSM 5975 / JCM 20966 / LMG 6465 / NBRC 14845 / NCIMB 13405 / ORS 571).